Consider the following 180-residue polypeptide: MTQRLSKLYFEQISPKLIEKFSYKNMHQVPRVEKIVINRGVGEAAQSNKVLESSLKELNLISGQKGIITRSKKAIAGFKIREKVPVGVFVTLRGDRMYSFLDRLINLALPRIRDFQGISAQSFDKYGNYSLGLEEQLMFPEIEYDKIDQLRGMDISIVTNARNSEEGLALLKEFGLPFKS.

It belongs to the universal ribosomal protein uL5 family. As to quaternary structure, part of the 50S ribosomal subunit; contacts the 5S rRNA.

Its subcellular location is the plastid. It is found in the chloroplast. Binds 5S rRNA, forms part of the central protuberance of the 50S subunit. In Stigeoclonium helveticum (Green alga), this protein is Large ribosomal subunit protein uL5c (rpl5).